The sequence spans 206 residues: Small ribosomal subunit protein uS4 (206 aa).

In terms of domain architecture, S4 RNA-binding spans 96–158; it reads GRLDNVVYRM…AKQQSRIKAA (63 aa).

This sequence belongs to the universal ribosomal protein uS4 family. In terms of assembly, part of the 30S ribosomal subunit. Contacts protein S5. The interaction surface between S4 and S5 is involved in control of translational fidelity.

Functionally, one of the primary rRNA binding proteins, it binds directly to 16S rRNA where it nucleates assembly of the body of the 30S subunit. Its function is as follows. With S5 and S12 plays an important role in translational accuracy. The polypeptide is Small ribosomal subunit protein uS4 (Aliivibrio fischeri (strain ATCC 700601 / ES114) (Vibrio fischeri)).